A 387-amino-acid chain; its full sequence is MNIHEYQAKAIFADNSIPTLKGKVAFSVDEAVANAKELGGSVWAVKAQIHAGGRGLGGGVKIAKNLDEVKDYASKILGMNLVTHQTGPEGKLVQKLYIESGANIVKEYYLAILFNRMAEQITIIASSEGGMDIEKVAKESPEKIAKVGIDPQIGFKMFHGLEVAKVLGLDKDESKKLISMIAKLYKLYMDKDMNMLEINPLIKTAEGDFYALDAKCSFDDSALYRHPEIAELRDITEENPAEREAAEFGLSYVKLDGDVACMVNGAGLAMATMDIINYSGAKPANFLDVGGGASAETVAKAFEIILRDKNVKVIFINIFGGIVRCDRIANGILEATKNVEVNIPIVVRLDGTNAAEAKTILDNSNLKNIKAATNLKNGAELVKSLVG.

ATP is bound by residues lysine 46, 53 to 55, glutamate 99, alanine 102, and glutamate 107; that span reads GRG. 2 residues coordinate Mg(2+): asparagine 199 and aspartate 213. Substrate contacts are provided by residues asparagine 264 and 321 to 323; that span reads GIV.

This sequence belongs to the succinate/malate CoA ligase beta subunit family. As to quaternary structure, heterotetramer of two alpha and two beta subunits. Requires Mg(2+) as cofactor.

It catalyses the reaction succinate + ATP + CoA = succinyl-CoA + ADP + phosphate. It carries out the reaction GTP + succinate + CoA = succinyl-CoA + GDP + phosphate. It functions in the pathway carbohydrate metabolism; tricarboxylic acid cycle; succinate from succinyl-CoA (ligase route): step 1/1. Functionally, succinyl-CoA synthetase functions in the citric acid cycle (TCA), coupling the hydrolysis of succinyl-CoA to the synthesis of either ATP or GTP and thus represents the only step of substrate-level phosphorylation in the TCA. The beta subunit provides nucleotide specificity of the enzyme and binds the substrate succinate, while the binding sites for coenzyme A and phosphate are found in the alpha subunit. In Campylobacter jejuni subsp. jejuni serotype O:23/36 (strain 81-176), this protein is Succinate--CoA ligase [ADP-forming] subunit beta.